Reading from the N-terminus, the 128-residue chain is Ribonuclease pancreatic (128 aa).

Over residues Lys-1 to Met-13 the composition is skewed to basic and acidic residues. Residues Lys-1 to Cys-26 form a disordered region. Substrate contacts are provided by Lys-7 and Arg-10. His-12 functions as the Proton acceptor in the catalytic mechanism. Residues Asp-14–Cys-26 are compositionally biased toward polar residues. Cystine bridges form between Cys-26–Cys-84, Cys-40–Cys-95, Cys-58–Cys-110, and Cys-65–Cys-72. Asn-34 carries N-linked (GlcNAc...) asparagine glycosylation. A substrate-binding site is contributed by Lys-41 to Thr-45. Asn-62 carries an N-linked (GlcNAc...) asparagine glycan. Substrate contacts are provided by Lys-66 and Arg-85. His-119 serves as the catalytic Proton donor.

Belongs to the pancreatic ribonuclease family. Monomer. Interacts with and forms tight 1:1 complexes with RNH1. Dimerization of two such complexes may occur. Interaction with RNH1 inhibits this protein. In terms of tissue distribution, pancreas.

It is found in the secreted. The enzyme catalyses an [RNA] containing cytidine + H2O = an [RNA]-3'-cytidine-3'-phosphate + a 5'-hydroxy-ribonucleotide-3'-[RNA].. The catalysed reaction is an [RNA] containing uridine + H2O = an [RNA]-3'-uridine-3'-phosphate + a 5'-hydroxy-ribonucleotide-3'-[RNA].. Endonuclease that catalyzes the cleavage of RNA on the 3' side of pyrimidine nucleotides. Acts on single-stranded and double-stranded RNA. The sequence is that of Ribonuclease pancreatic (RNASE1) from Equus caballus (Horse).